The primary structure comprises 501 residues: Cytochrome P450 7A1 (501 aa).

The chain crosses the membrane as a helical span at residues 4–24 (IFWIWGICLSVCCCLWLILGL). Cysteine 441 provides a ligand contact to heme.

It belongs to the cytochrome P450 family. Requires heme as cofactor. Detected in liver.

It localises to the endoplasmic reticulum membrane. The protein resides in the microsome membrane. It carries out the reaction cholesterol + reduced [NADPH--hemoprotein reductase] + O2 = 7alpha-hydroxycholesterol + oxidized [NADPH--hemoprotein reductase] + H2O + H(+). The enzyme catalyses 4beta-hydroxycholesterol + reduced [NADPH--hemoprotein reductase] + O2 = 4beta,7alpha-dihydroxycholesterol + oxidized [NADPH--hemoprotein reductase] + H2O + H(+). The catalysed reaction is lathosterol + reduced [NADPH--hemoprotein reductase] + O2 = 7alpha,8alpha-epoxy-5alpha-cholestan-3beta-ol + oxidized [NADPH--hemoprotein reductase] + H2O + H(+). It catalyses the reaction lathosterol + reduced [NADPH--hemoprotein reductase] + O2 = 5alpha-cholestan-7-oxo-3beta-ol + oxidized [NADPH--hemoprotein reductase] + H2O + H(+). It carries out the reaction 7-dehydrocholesterol + reduced [NADPH--hemoprotein reductase] + O2 = 7-oxocholesterol + oxidized [NADPH--hemoprotein reductase] + H2O + H(+). The enzyme catalyses (24S)-hydroxycholesterol + reduced [NADPH--hemoprotein reductase] + O2 = (24S)-7alpha-dihydroxycholesterol + oxidized [NADPH--hemoprotein reductase] + H2O + H(+). The catalysed reaction is (24R)-hydroxycholesterol + reduced [NADPH--hemoprotein reductase] + O2 = (24R)-7alpha-dihydroxycholesterol + oxidized [NADPH--hemoprotein reductase] + H2O + H(+). The protein operates within lipid metabolism; bile acid biosynthesis. Its pathway is steroid metabolism; cholesterol degradation. Functionally, a cytochrome P450 monooxygenase involved in the metabolism of endogenous cholesterol and its oxygenated derivatives (oxysterols). Mechanistically, uses molecular oxygen inserting one oxygen atom into a substrate, and reducing the second into a water molecule, with two electrons provided by NADPH via cytochrome P450 reductase (CPR; NADPH-ferrihemoprotein reductase). Functions as a critical regulatory enzyme of bile acid biosynthesis and cholesterol homeostasis. Catalyzes the hydroxylation of carbon hydrogen bond at 7-alpha position of cholesterol, a rate-limiting step in cholesterol catabolism and bile acid biosynthesis. 7-alpha hydroxylates several oxysterols, including 4beta-hydroxycholesterol and 24-hydroxycholesterol. Catalyzes the oxidation of the 7,8 double bond of 7-dehydrocholesterol and lathosterol with direct and predominant formation of the 7-keto derivatives. The chain is Cytochrome P450 7A1 (CYP7A1) from Oryctolagus cuniculus (Rabbit).